We begin with the raw amino-acid sequence, 248 residues long: MTLISAPRIGIAGITGRLGTLCAEEAGSALVGGLSRTADPQRNITTDPAALAKNCDVVIDVSHASTVPAHAAAFAQAGCAWVLGTTGLDQGAQDAVNAAAQHIPVLQAANFSPALTLFLELARQLGAGLPDYDAEILEVHHRQKLDAPSGTALAIGRAVAEGRGVSFEDVARTDQNGRRPDGAIGFASLRGGQIVGEHDLVLMAADEQITLSHRALDRRVFARGALLAARWLAGRPAGLYTMADALKR.

Position 13-18 (13-18) interacts with NAD(+); sequence GITGRL. Arginine 36 serves as a coordination point for NADP(+). NAD(+)-binding positions include 84–86 and 108–111; these read GTT and AANF. Histidine 140 functions as the Proton donor/acceptor in the catalytic mechanism. Histidine 141 contributes to the (S)-2,3,4,5-tetrahydrodipicolinate binding site. The active-site Proton donor is the lysine 144. 150–151 is a (S)-2,3,4,5-tetrahydrodipicolinate binding site; that stretch reads GT.

It belongs to the DapB family.

Its subcellular location is the cytoplasm. The catalysed reaction is (S)-2,3,4,5-tetrahydrodipicolinate + NAD(+) + H2O = (2S,4S)-4-hydroxy-2,3,4,5-tetrahydrodipicolinate + NADH + H(+). The enzyme catalyses (S)-2,3,4,5-tetrahydrodipicolinate + NADP(+) + H2O = (2S,4S)-4-hydroxy-2,3,4,5-tetrahydrodipicolinate + NADPH + H(+). Its pathway is amino-acid biosynthesis; L-lysine biosynthesis via DAP pathway; (S)-tetrahydrodipicolinate from L-aspartate: step 4/4. In terms of biological role, catalyzes the conversion of 4-hydroxy-tetrahydrodipicolinate (HTPA) to tetrahydrodipicolinate. This Gluconobacter oxydans (strain 621H) (Gluconobacter suboxydans) protein is 4-hydroxy-tetrahydrodipicolinate reductase.